Here is a 682-residue protein sequence, read N- to C-terminus: DNA-directed RNA polymerase subunit beta' (682 aa).

Positions 69, 71, 87, and 90 each coordinate Zn(2+). Asp489, Asp491, and Asp493 together coordinate Mg(2+).

Belongs to the RNA polymerase beta' chain family. RpoC1 subfamily. In terms of assembly, in plastids the minimal PEP RNA polymerase catalytic core is composed of four subunits: alpha, beta, beta', and beta''. When a (nuclear-encoded) sigma factor is associated with the core the holoenzyme is formed, which can initiate transcription. Mg(2+) is required as a cofactor. Zn(2+) serves as cofactor.

It is found in the plastid. Its subcellular location is the chloroplast. It catalyses the reaction RNA(n) + a ribonucleoside 5'-triphosphate = RNA(n+1) + diphosphate. In terms of biological role, DNA-dependent RNA polymerase catalyzes the transcription of DNA into RNA using the four ribonucleoside triphosphates as substrates. The sequence is that of DNA-directed RNA polymerase subunit beta' from Vitis vinifera (Grape).